The primary structure comprises 80 residues: Metallothionein-like protein type 2 MET1 (80 aa).

This sequence belongs to the metallothionein superfamily. Type 15 family.

Metallothioneins have a high content of cysteine residues that bind various heavy metals. This Fragaria ananassa (Strawberry) protein is Metallothionein-like protein type 2 MET1 (MET1).